The chain runs to 236 residues: Ras-related protein RabY (236 aa).

18–25 is a GTP binding site; the sequence is GDRKTGKT. The short motif at 40-48 is the Effector region element; it reads YRQTNLLHF. GTP is bound by residues 66 to 70 and 126 to 129; these read DSQAD and NKSD. The span at 192–225 shows a compositional bias: low complexity; the sequence is QQQQQQQQQQQQQQQQQQQQQQQQQQQQQQQHQQ. Residues 192 to 236 are disordered; that stretch reads QQQQQQQQQQQQQQQQQQQQQQQQQQQQQQQHQQSSKTKIGCLIQ. C233 bears the Cysteine methyl ester mark. The S-geranylgeranyl cysteine moiety is linked to residue C233. Residues 234 to 236 constitute a propeptide, removed in mature form; that stretch reads LIQ.

Belongs to the small GTPase superfamily. Rab family.

Its subcellular location is the cell membrane. The protein is Ras-related protein RabY (rabY) of Dictyostelium discoideum (Social amoeba).